The sequence spans 184 residues: Putative axial regulator YABBY 2 (184 aa).

The C4-type zinc-finger motif lies at 15–42 (CSFCTTILAVSVPYASLFTLVTVRCGHC). 2 stretches are compositionally biased toward polar residues: residues 76–94 (LVTR…NLSE) and 171–184 (LDQS…NGYY). Disordered stretches follow at residues 76–115 (LVTR…RQRV) and 162–184 (LDGN…NGYY).

Belongs to the YABBY family. Interacts with SPL/NZZ and SPEAR2. In terms of tissue distribution, expressed at low levels in abaxial regions of lateral aerial organ primordia leading to cotyledons, leaves, flower meristems, sepals, petals, stamen and carpels, but not in roots.

Its subcellular location is the nucleus. Functionally, involved in the abaxial cell fate determination during embryogenesis and organogenesis. The sequence is that of Putative axial regulator YABBY 2 (YAB2) from Arabidopsis thaliana (Mouse-ear cress).